The following is a 101-amino-acid chain: MAKVSSVQKNLKRSKLFNKLKLKRQALKSKIYDKNLSLEERFNLVLKLSKLPRNSSSTRIRNRCAETGRPRGYYRKFKLCRNIIRELAGSGIIPGLRKSSW.

This sequence belongs to the universal ribosomal protein uS14 family. Part of the 30S ribosomal subunit. Contacts proteins S3 and S10.

Functionally, binds 16S rRNA, required for the assembly of 30S particles and may also be responsible for determining the conformation of the 16S rRNA at the A site. The protein is Small ribosomal subunit protein uS14 of Orientia tsutsugamushi (strain Ikeda) (Rickettsia tsutsugamushi).